The following is a 576-amino-acid chain: Homeobox protein invected (576 aa).

Disordered stretches follow at residues 1–68, 80–102, 305–344, 364–410, and 426–476; these read MSTL…DEQT, EVEEEHDLDLEDPASCCSENSVL, GGSVSGSSTGSSKNSGNTNGNRSPLKAPKKSGKPLNLAQS, NSND…GEDS, and SDRP…RPRT. Acidic residues predominate over residues 80–91; sequence EVEEEHDLDLED. Low complexity-rich tracts occupy residues 309–325, 364–381, and 395–405; these read SGSSTGSSKNSGNTNGN, NSNDSNSTATSSSTTNTS, and AGAGATGASGK. Residues 450 to 468 are compositionally biased toward gly residues; sequence AGGGGGGVEKGEAADGGGV. A DNA-binding region (homeobox) is located at residues 471-530; that stretch reads DKRPRTAFSGTQLARLKHEFNENRYLTEKRRQQLSGELGLNEAQIKIWFQNKRAKLKKSS.

It belongs to the engrailed homeobox family. Expressed in row 6/7 of the embryonic neuroectoderm.

The protein resides in the nucleus. Its function is as follows. Engrailed (en) and invected (inv) are functionally redundant transcription factors in neuronal precursor cell NB5-3 specification. Inv is unable to substitute for en in other regulatory processes such as maintaining gsb expression in the neuroectoderm after stage 10 of embryogenesis. Maintenance of gsb expression in row 5 of the neuroectoderm involves an as yet unidentified short range signaling molecule. The polypeptide is Homeobox protein invected (inv) (Drosophila melanogaster (Fruit fly)).